The following is a 64-amino-acid chain: Small ribosomal subunit protein bS21 (64 aa).

It belongs to the bacterial ribosomal protein bS21 family.

This chain is Small ribosomal subunit protein bS21, found in Oenococcus oeni (strain ATCC BAA-331 / PSU-1).